A 299-amino-acid chain; its full sequence is Serpentine receptor class gamma-30 (299 aa).

7 helical membrane passes run Gly18–Leu38, Ile59–Pro79, Ile98–Val118, Ile137–Phe157, Ile189–Ile209, Leu223–Tyr243, and Ala260–Leu280.

This sequence belongs to the nematode receptor-like protein srg family.

The protein localises to the membrane. The sequence is that of Serpentine receptor class gamma-30 (srg-30) from Caenorhabditis elegans.